Reading from the N-terminus, the 206-residue chain is uncharacterized protein (206 aa).

Residues 4-24 (LLVVIAVALFIAAIVVLVVAI) traverse the membrane as a helical segment.

Its subcellular location is the membrane. This is an uncharacterized protein from Mycobacterium tuberculosis (strain CDC 1551 / Oshkosh).